A 352-amino-acid polypeptide reads, in one-letter code: 7,8-didemethyl-8-hydroxy-5-deazariboflavin synthase (352 aa).

In terms of domain architecture, Radical SAM core spans 35-275 (ITFSKNAFIP…EDISIQVPPN (241 aa)). [4Fe-4S] cluster-binding residues include cysteine 49, cysteine 53, and cysteine 56.

It belongs to the radical SAM superfamily. CofG family. As to quaternary structure, consists of two subunits, CofG and CofH. Requires [4Fe-4S] cluster as cofactor.

The catalysed reaction is 5-amino-5-(4-hydroxybenzyl)-6-(D-ribitylimino)-5,6-dihydrouracil + S-adenosyl-L-methionine = 7,8-didemethyl-8-hydroxy-5-deazariboflavin + 5'-deoxyadenosine + L-methionine + NH4(+) + H(+). Its pathway is cofactor biosynthesis; coenzyme F0 biosynthesis. Catalyzes the radical-mediated synthesis of 7,8-didemethyl-8-hydroxy-5-deazariboflavin from 5-amino-5-(4-hydroxybenzyl)-6-(D-ribitylimino)-5,6-dihydrouracil. This is 7,8-didemethyl-8-hydroxy-5-deazariboflavin synthase from Methanococcus maripaludis (strain C6 / ATCC BAA-1332).